Here is a 102-residue protein sequence, read N- to C-terminus: Thioredoxin (102 aa).

The 102-residue stretch at methionine 1–glutamine 102 folds into the Thioredoxin domain. The cysteines at positions 28 and 31 are disulfide-linked.

Belongs to the thioredoxin family.

Functionally, participates in various redox reactions through the reversible oxidation of its active center dithiol to a disulfide and catalyzes dithiol-disulfide exchange reactions. The protein is Thioredoxin (trxA) of Chlamydia trachomatis serovar D (strain ATCC VR-885 / DSM 19411 / UW-3/Cx).